The primary structure comprises 449 residues: MMKSSELEKKKVLVLGTAKSGIAAATYLVKAGAVVTVNDGGTPSENDVQTLESLKVETLFGSHPLSLLDGTDLIVKNPGIPYQIPLLQKALELGIPVWTEVELAYRSTKADWVAITGSNGKTTTTTLVHELLKRGSKRVHLAGNIGFPAVEVAQQAEAGDVIVIELSSFQLMGIESFCPVSAAFLNLSPAHLDYHGDVTSYAAAKARIFSNMDEAGRLVVNADDEEVMRLSETAAAERLTFSRRQDAYAHIENDMIFVGQTEILPVRELALGGGHNLENVLAALTLIEPFGISLTAIQDVLRTFGGVAHRTEYIGEFAGRKVYNDSKATNNVATEAALSGFQSPIIWICGGLERGADLTPLKSAMTHVKHVIGLGETGQRFADLATEQQIASTVTREMEEAVATAFDVSKPGDIILLSPASASWDQYKTYEERGEHFIRSVQKVGGMMK.

117 to 123 serves as a coordination point for ATP; the sequence is GSNGKTT.

It belongs to the MurCDEF family.

It is found in the cytoplasm. The enzyme catalyses UDP-N-acetyl-alpha-D-muramoyl-L-alanine + D-glutamate + ATP = UDP-N-acetyl-alpha-D-muramoyl-L-alanyl-D-glutamate + ADP + phosphate + H(+). It functions in the pathway cell wall biogenesis; peptidoglycan biosynthesis. Cell wall formation. Catalyzes the addition of glutamate to the nucleotide precursor UDP-N-acetylmuramoyl-L-alanine (UMA). The sequence is that of UDP-N-acetylmuramoylalanine--D-glutamate ligase from Exiguobacterium sibiricum (strain DSM 17290 / CCUG 55495 / CIP 109462 / JCM 13490 / 255-15).